The chain runs to 153 residues: 3-hydroxyacyl-[acyl-carrier-protein] dehydratase FabZ (153 aa).

His-54 is a catalytic residue.

It belongs to the thioester dehydratase family. FabZ subfamily.

Its subcellular location is the cytoplasm. It carries out the reaction a (3R)-hydroxyacyl-[ACP] = a (2E)-enoyl-[ACP] + H2O. In terms of biological role, involved in unsaturated fatty acids biosynthesis. Catalyzes the dehydration of short chain beta-hydroxyacyl-ACPs and long chain saturated and unsaturated beta-hydroxyacyl-ACPs. The sequence is that of 3-hydroxyacyl-[acyl-carrier-protein] dehydratase FabZ from Shewanella sediminis (strain HAW-EB3).